The primary structure comprises 608 residues: Chaperone protein HtpG (608 aa).

The segment at 1 to 332 is a; substrate-binding; sequence MQFQTEVNQL…VEDLPLNVSR (332 aa). Residues 333–536 form a b region; it reads EILQENQILK…KNKPDFAMQQ (204 aa). The c stretch occupies residues 537–608; it reads LLKQMGQEQN…LTKIINKAFS (72 aa).

This sequence belongs to the heat shock protein 90 family. In terms of assembly, homodimer.

The protein localises to the cytoplasm. Molecular chaperone. Has ATPase activity. The sequence is that of Chaperone protein HtpG from Campylobacter jejuni subsp. jejuni serotype O:6 (strain 81116 / NCTC 11828).